A 425-amino-acid chain; its full sequence is tRNA(Ile)-lysidine synthase (425 aa).

27-32 serves as a coordination point for ATP; sequence SGGLDS.

Belongs to the tRNA(Ile)-lysidine synthase family.

Its subcellular location is the cytoplasm. It carries out the reaction cytidine(34) in tRNA(Ile2) + L-lysine + ATP = lysidine(34) in tRNA(Ile2) + AMP + diphosphate + H(+). In terms of biological role, ligates lysine onto the cytidine present at position 34 of the AUA codon-specific tRNA(Ile) that contains the anticodon CAU, in an ATP-dependent manner. Cytidine is converted to lysidine, thus changing the amino acid specificity of the tRNA from methionine to isoleucine. In Streptococcus pneumoniae (strain Taiwan19F-14), this protein is tRNA(Ile)-lysidine synthase.